A 261-amino-acid polypeptide reads, in one-letter code: Uridylate kinase (261 aa).

Residues 1–23 form a disordered region; sequence MTEPDVAGAPASKPEPASTGAAS. An ATP-binding site is contributed by 36–39; it reads KLGG. UMP is bound at residue Gly-77. Residues Gly-78 and Arg-82 each contribute to the ATP site. Residues Asp-97 and 158–165 contribute to the UMP site; that span reads MGLPYFST. Residues Phe-191 and Asp-194 each contribute to the ATP site.

It belongs to the UMP kinase family. Homohexamer.

Its subcellular location is the cytoplasm. It catalyses the reaction UMP + ATP = UDP + ADP. It participates in pyrimidine metabolism; CTP biosynthesis via de novo pathway; UDP from UMP (UMPK route): step 1/1. With respect to regulation, inhibited by UTP. Functionally, catalyzes the reversible phosphorylation of UMP to UDP. In Mycobacterium tuberculosis (strain ATCC 25177 / H37Ra), this protein is Uridylate kinase.